A 431-amino-acid chain; its full sequence is Enolase (431 aa).

Gln167 is a (2R)-2-phosphoglycerate binding site. The Proton donor role is filled by Glu209. Residues Asp246, Glu289, and Asp316 each contribute to the Mg(2+) site. Residues Lys341, Arg370, Ser371, and Lys392 each contribute to the (2R)-2-phosphoglycerate site. The active-site Proton acceptor is the Lys341.

Belongs to the enolase family. Component of the RNA degradosome, a multiprotein complex involved in RNA processing and mRNA degradation. Mg(2+) serves as cofactor.

It is found in the cytoplasm. The protein resides in the secreted. The protein localises to the cell surface. It catalyses the reaction (2R)-2-phosphoglycerate = phosphoenolpyruvate + H2O. It participates in carbohydrate degradation; glycolysis; pyruvate from D-glyceraldehyde 3-phosphate: step 4/5. Functionally, catalyzes the reversible conversion of 2-phosphoglycerate (2-PG) into phosphoenolpyruvate (PEP). It is essential for the degradation of carbohydrates via glycolysis. This chain is Enolase, found in Chromohalobacter salexigens (strain ATCC BAA-138 / DSM 3043 / CIP 106854 / NCIMB 13768 / 1H11).